The primary structure comprises 465 residues: Soluble pyridine nucleotide transhydrogenase (465 aa).

Glu36–Cys45 serves as a coordination point for FAD.

Belongs to the class-I pyridine nucleotide-disulfide oxidoreductase family. Requires FAD as cofactor.

The protein resides in the cytoplasm. The enzyme catalyses NAD(+) + NADPH = NADH + NADP(+). Its function is as follows. Conversion of NADPH, generated by peripheral catabolic pathways, to NADH, which can enter the respiratory chain for energy generation. The chain is Soluble pyridine nucleotide transhydrogenase from Sodalis glossinidius (strain morsitans).